Here is a 510-residue protein sequence, read N- to C-terminus: Probable cytosol aminopeptidase (510 aa).

Mn(2+) is bound by residues lysine 268 and aspartate 273. Lysine 280 is an active-site residue. Aspartate 291, aspartate 350, and glutamate 352 together coordinate Mn(2+). Arginine 354 is an active-site residue.

It belongs to the peptidase M17 family. Requires Mn(2+) as cofactor.

The protein localises to the cytoplasm. It carries out the reaction Release of an N-terminal amino acid, Xaa-|-Yaa-, in which Xaa is preferably Leu, but may be other amino acids including Pro although not Arg or Lys, and Yaa may be Pro. Amino acid amides and methyl esters are also readily hydrolyzed, but rates on arylamides are exceedingly low.. The catalysed reaction is Release of an N-terminal amino acid, preferentially leucine, but not glutamic or aspartic acids.. In terms of biological role, presumably involved in the processing and regular turnover of intracellular proteins. Catalyzes the removal of unsubstituted N-terminal amino acids from various peptides. The chain is Probable cytosol aminopeptidase from Micrococcus luteus (strain ATCC 4698 / DSM 20030 / JCM 1464 / CCM 169 / CCUG 5858 / IAM 1056 / NBRC 3333 / NCIMB 9278 / NCTC 2665 / VKM Ac-2230) (Micrococcus lysodeikticus).